The sequence spans 108 residues: uncharacterized protein (108 aa).

A helical membrane pass occupies residues 7–27 (FIPMLLVANAAPYFFYPIFML).

To N.crassa NCU05373.1.

It localises to the membrane. This is an uncharacterized protein from Schizosaccharomyces pombe (strain 972 / ATCC 24843) (Fission yeast).